Here is a 122-residue protein sequence, read N- to C-terminus: Large ribosomal subunit protein eL22B (122 aa).

It belongs to the eukaryotic ribosomal protein eL22 family. In terms of assembly, component of the large ribosomal subunit (LSU). Mature yeast ribosomes consist of a small (40S) and a large (60S) subunit. The 40S small subunit contains 1 molecule of ribosomal RNA (18S rRNA) and 33 different proteins (encoded by 57 genes). The large 60S subunit contains 3 rRNA molecules (25S, 5.8S and 5S rRNA) and 46 different proteins (encoded by 81 genes).

Its subcellular location is the cytoplasm. In terms of biological role, component of the ribosome, a large ribonucleoprotein complex responsible for the synthesis of proteins in the cell. The small ribosomal subunit (SSU) binds messenger RNAs (mRNAs) and translates the encoded message by selecting cognate aminoacyl-transfer RNA (tRNA) molecules. The large subunit (LSU) contains the ribosomal catalytic site termed the peptidyl transferase center (PTC), which catalyzes the formation of peptide bonds, thereby polymerizing the amino acids delivered by tRNAs into a polypeptide chain. The nascent polypeptides leave the ribosome through a tunnel in the LSU and interact with protein factors that function in enzymatic processing, targeting, and the membrane insertion of nascent chains at the exit of the ribosomal tunnel. The sequence is that of Large ribosomal subunit protein eL22B from Saccharomyces cerevisiae (strain ATCC 204508 / S288c) (Baker's yeast).